Here is a 234-residue protein sequence, read N- to C-terminus: 1-(5-phosphoribosyl)-5-[(5-phosphoribosylamino)methylideneamino] imidazole-4-carboxamide isomerase (234 aa).

Asp9 functions as the Proton acceptor in the catalytic mechanism. The Proton donor role is filled by Asp131.

It belongs to the HisA/HisF family.

It is found in the cytoplasm. It catalyses the reaction 1-(5-phospho-beta-D-ribosyl)-5-[(5-phospho-beta-D-ribosylamino)methylideneamino]imidazole-4-carboxamide = 5-[(5-phospho-1-deoxy-D-ribulos-1-ylimino)methylamino]-1-(5-phospho-beta-D-ribosyl)imidazole-4-carboxamide. It participates in amino-acid biosynthesis; L-histidine biosynthesis; L-histidine from 5-phospho-alpha-D-ribose 1-diphosphate: step 4/9. The sequence is that of 1-(5-phosphoribosyl)-5-[(5-phosphoribosylamino)methylideneamino] imidazole-4-carboxamide isomerase from Staphylococcus aureus (strain NCTC 8325 / PS 47).